The sequence spans 257 residues: Septu protein PtuB (257 aa).

The 48-residue stretch at 49–96 folds into the HNH domain; that stretch reads CVYCECRLDEESKYMEVEHFLPKDTYPNLVVNWRNLLPSCKRCNGKKG.

Component of antiviral defense system Septu type I, composed of PtuA and PtuB. Expression of Septu type I in B.subtilis (strain BEST7003) confers resistance to phages SBSphiC and SBSphiJ. May be a nuclease. The chain is Septu protein PtuB from Bacillus thuringiensis.